The sequence spans 123 residues: Protein Wnt-3a (123 aa).

Residue S1 is the site of O-palmitoleoyl serine attachment. C89 and C104 are joined by a disulfide. Residue N90 is glycosylated (N-linked (GlcNAc...) asparagine).

The protein belongs to the Wnt family. In terms of processing, disulfide bonds have critical and distinct roles in secretion and activity. Loss of each conserved cysteine results in high molecular weight oxidized Wnt oligomers, which are formed through inter-Wnt disulfide bonding. Palmitoleoylation is required for efficient binding to frizzled receptors. Depalmitoleoylation leads to Wnt signaling pathway inhibition.

The protein localises to the secreted. The protein resides in the extracellular space. It is found in the extracellular matrix. Functionally, ligand for members of the frizzled family of seven transmembrane receptors. Functions in the canonical Wnt signaling pathway that results in activation of transcription factors of the TCF/LEF family. Required for normal embryonic mesoderm development and formation of caudal somites. Required for normal morphogenesis of the developing neural tube. This Meleagris gallopavo (Wild turkey) protein is Protein Wnt-3a (WNT3A).